A 238-amino-acid polypeptide reads, in one-letter code: Enolase-phosphatase E1 (238 aa).

Mg(2+) is bound by residues aspartate 14 and glutamate 16. Substrate-binding positions include 128–129 and lysine 165; that span reads SS. Aspartate 192 contacts Mg(2+).

This sequence belongs to the HAD-like hydrolase superfamily. MasA/MtnC family. As to quaternary structure, monomer. It depends on Mg(2+) as a cofactor.

The protein resides in the cytoplasm. It localises to the nucleus. The catalysed reaction is 5-methylsulfanyl-2,3-dioxopentyl phosphate + H2O = 1,2-dihydroxy-5-(methylsulfanyl)pent-1-en-3-one + phosphate. It participates in amino-acid biosynthesis; L-methionine biosynthesis via salvage pathway; L-methionine from S-methyl-5-thio-alpha-D-ribose 1-phosphate: step 3/6. The protein operates within amino-acid biosynthesis; L-methionine biosynthesis via salvage pathway; L-methionine from S-methyl-5-thio-alpha-D-ribose 1-phosphate: step 4/6. In terms of biological role, bifunctional enzyme that catalyzes the enolization of 2,3-diketo-5-methylthiopentyl-1-phosphate (DK-MTP-1-P) into the intermediate 2-hydroxy-3-keto-5-methylthiopentenyl-1-phosphate (HK-MTPenyl-1-P), which is then dephosphorylated to form the acireductone 1,2-dihydroxy-3-keto-5-methylthiopentene (DHK-MTPene). The polypeptide is Enolase-phosphatase E1 (Fusarium vanettenii (strain ATCC MYA-4622 / CBS 123669 / FGSC 9596 / NRRL 45880 / 77-13-4) (Fusarium solani subsp. pisi)).